Reading from the N-terminus, the 530-residue chain is GMP synthase [glutamine-hydrolyzing] (530 aa).

The Glutamine amidotransferase type-1 domain maps to 18 to 207; that stretch reads TILVLDFGSQ…AVDICQAKTN (190 aa). Cys-94 acts as the Nucleophile in catalysis. Residues His-181 and Glu-183 contribute to the active site. In terms of domain architecture, GMPS ATP-PPase spans 208–405; the sequence is WSMENFIDTE…LGVPEDLVWR (198 aa). An ATP-binding site is contributed by 236 to 242; that stretch reads SGGVDST. Residues Arg-309, Asp-467, Lys-522, and Glu-528 each coordinate XMP.

Homodimer. Mg(2+) serves as cofactor.

It is found in the cytoplasm. The protein resides in the cytosol. The enzyme catalyses XMP + L-glutamine + ATP + H2O = GMP + L-glutamate + AMP + diphosphate + 2 H(+). The protein operates within purine metabolism; GMP biosynthesis; GMP from XMP (L-Gln route): step 1/1. In terms of biological role, catalyzes the conversion of xanthine monophosphate (XMP) to GMP in the presence of glutamine and ATP through an adenyl-XMP intermediate. The protein is GMP synthase [glutamine-hydrolyzing] (GUA1) of Candida albicans (strain SC5314 / ATCC MYA-2876) (Yeast).